The sequence spans 338 residues: Methionine synthase (338 aa).

H210, C212, E234, and C294 together coordinate Zn(2+).

It belongs to the archaeal MetE family. The cofactor is Zn(2+).

It functions in the pathway amino-acid biosynthesis; L-methionine biosynthesis via de novo pathway. Its function is as follows. Catalyzes the transfer of a methyl group to L-homocysteine resulting in methionine formation. The physiological methyl donor is unknown. In Pyrococcus horikoshii (strain ATCC 700860 / DSM 12428 / JCM 9974 / NBRC 100139 / OT-3), this protein is Methionine synthase.